The following is a 490-amino-acid chain: Aspartyl/glutamyl-tRNA(Asn/Gln) amidotransferase subunit B (490 aa).

The protein belongs to the GatB/GatE family. GatB subfamily. Heterotrimer of A, B and C subunits.

It catalyses the reaction L-glutamyl-tRNA(Gln) + L-glutamine + ATP + H2O = L-glutaminyl-tRNA(Gln) + L-glutamate + ADP + phosphate + H(+). The catalysed reaction is L-aspartyl-tRNA(Asn) + L-glutamine + ATP + H2O = L-asparaginyl-tRNA(Asn) + L-glutamate + ADP + phosphate + 2 H(+). Functionally, allows the formation of correctly charged Asn-tRNA(Asn) or Gln-tRNA(Gln) through the transamidation of misacylated Asp-tRNA(Asn) or Glu-tRNA(Gln) in organisms which lack either or both of asparaginyl-tRNA or glutaminyl-tRNA synthetases. The reaction takes place in the presence of glutamine and ATP through an activated phospho-Asp-tRNA(Asn) or phospho-Glu-tRNA(Gln). This is Aspartyl/glutamyl-tRNA(Asn/Gln) amidotransferase subunit B from Burkholderia thailandensis (strain ATCC 700388 / DSM 13276 / CCUG 48851 / CIP 106301 / E264).